The primary structure comprises 448 residues: Eukaryotic translation initiation factor 3 subunit E (448 aa).

Residues 254–423 form the PCI domain; it reads TDLFFSPAYI…GTVIMNHPPQ (170 aa).

Belongs to the eIF-3 subunit E family. As to quaternary structure, component of the eukaryotic translation initiation factor 3 (eIF-3) complex.

It is found in the cytoplasm. In terms of biological role, component of the eukaryotic translation initiation factor 3 (eIF-3) complex, which is involved in protein synthesis of a specialized repertoire of mRNAs and, together with other initiation factors, stimulates binding of mRNA and methionyl-tRNAi to the 40S ribosome. The eIF-3 complex specifically targets and initiates translation of a subset of mRNAs involved in cell proliferation. The chain is Eukaryotic translation initiation factor 3 subunit E (int6) from Emericella nidulans (strain FGSC A4 / ATCC 38163 / CBS 112.46 / NRRL 194 / M139) (Aspergillus nidulans).